The sequence spans 321 residues: Tyrosine recombinase XerC (321 aa).

Positions 16–107 constitute a Core-binding (CB) domain; that stretch reads PSIAQEMTRW…GLRSFGRFLE (92 aa). One can recognise a Tyr recombinase domain in the interval 128–315; it reads SLPKPLPMAS…DSERLLEVYA (188 aa). Active-site residues include Arg-173, Lys-199, His-267, Arg-270, and His-293. The active-site O-(3'-phospho-DNA)-tyrosine intermediate is Tyr-302.

Belongs to the 'phage' integrase family. XerC subfamily. In terms of assembly, forms a cyclic heterotetrameric complex composed of two molecules of XerC and two molecules of XerD.

It localises to the cytoplasm. In terms of biological role, site-specific tyrosine recombinase, which acts by catalyzing the cutting and rejoining of the recombining DNA molecules. The XerC-XerD complex is essential to convert dimers of the bacterial chromosome into monomers to permit their segregation at cell division. It also contributes to the segregational stability of plasmids. The sequence is that of Tyrosine recombinase XerC from Bradyrhizobium diazoefficiens (strain JCM 10833 / BCRC 13528 / IAM 13628 / NBRC 14792 / USDA 110).